The following is a 246-amino-acid chain: Adenosylcobinamide-GDP ribazoletransferase (246 aa).

A run of 6 helical transmembrane segments spans residues 34–54 (IVTFPLVGLLLGAIAGAVALL), 59–79 (CGVPLAALFGVLALALLTGGF), 113–133 (GGLALIFVLVAKVLVIGELLL), 138–158 (PIAALAAACAVGRGMAVLLMY), 171–191 (LFIGKVSLQQTLVTMAMGVAL), and 194–214 (VLLGLQGLRAALITLVLIWGL).

This sequence belongs to the CobS family. Requires Mg(2+) as cofactor.

Its subcellular location is the cell inner membrane. It carries out the reaction alpha-ribazole + adenosylcob(III)inamide-GDP = adenosylcob(III)alamin + GMP + H(+). It catalyses the reaction alpha-ribazole 5'-phosphate + adenosylcob(III)inamide-GDP = adenosylcob(III)alamin 5'-phosphate + GMP + H(+). The protein operates within cofactor biosynthesis; adenosylcobalamin biosynthesis; adenosylcobalamin from cob(II)yrinate a,c-diamide: step 7/7. In terms of biological role, joins adenosylcobinamide-GDP and alpha-ribazole to generate adenosylcobalamin (Ado-cobalamin). Also synthesizes adenosylcobalamin 5'-phosphate from adenosylcobinamide-GDP and alpha-ribazole 5'-phosphate. The polypeptide is Adenosylcobinamide-GDP ribazoletransferase (Klebsiella pneumoniae (strain 342)).